The chain runs to 119 residues: Holo-[acyl-carrier-protein] synthase (119 aa).

Mg(2+)-binding residues include D8 and E58.

This sequence belongs to the P-Pant transferase superfamily. AcpS family. Mg(2+) serves as cofactor.

The protein resides in the cytoplasm. The catalysed reaction is apo-[ACP] + CoA = holo-[ACP] + adenosine 3',5'-bisphosphate + H(+). Transfers the 4'-phosphopantetheine moiety from coenzyme A to a Ser of acyl-carrier-protein. The chain is Holo-[acyl-carrier-protein] synthase from Oceanobacillus iheyensis (strain DSM 14371 / CIP 107618 / JCM 11309 / KCTC 3954 / HTE831).